The sequence spans 168 residues: MSAHKTPDKAFPVSWDQFHRDCRALSWRLNETGPFHAVVAITRGGLVPAAIVARELGVRVIDTVCIASYDHLHKSELKVLKGISDMTVKLGGGSGRNLLVVDDLVDTGATARVVRGMIPDAHFATVYAKPLGKPLVDTFITEVSQDTWIYFPWDLDLAFAPPLRDGAA.

5-phospho-alpha-D-ribose 1-diphosphate-binding positions include 43 to 44 (RG) and 102 to 110 (DDLVDTGAT). A Mg(2+)-binding site is contributed by Asp103. Residues Asp106 and Ile149 each contribute to the guanine site. Positions 106 and 149 each coordinate xanthine. GMP-binding positions include 106–110 (DTGAT) and 148–149 (WI).

It belongs to the purine/pyrimidine phosphoribosyltransferase family. XGPT subfamily. As to quaternary structure, homotetramer. Mg(2+) serves as cofactor.

The protein localises to the cell inner membrane. It catalyses the reaction GMP + diphosphate = guanine + 5-phospho-alpha-D-ribose 1-diphosphate. It carries out the reaction XMP + diphosphate = xanthine + 5-phospho-alpha-D-ribose 1-diphosphate. The enzyme catalyses IMP + diphosphate = hypoxanthine + 5-phospho-alpha-D-ribose 1-diphosphate. It functions in the pathway purine metabolism; GMP biosynthesis via salvage pathway; GMP from guanine: step 1/1. The protein operates within purine metabolism; XMP biosynthesis via salvage pathway; XMP from xanthine: step 1/1. Functionally, purine salvage pathway enzyme that catalyzes the transfer of the ribosyl-5-phosphate group from 5-phospho-alpha-D-ribose 1-diphosphate (PRPP) to the N9 position of the 6-oxopurines guanine and xanthine to form the corresponding ribonucleotides GMP (guanosine 5'-monophosphate) and XMP (xanthosine 5'-monophosphate), with the release of PPi. To a lesser extent, also acts on hypoxanthine. This chain is Xanthine-guanine phosphoribosyltransferase, found in Nitrobacter winogradskyi (strain ATCC 25391 / DSM 10237 / CIP 104748 / NCIMB 11846 / Nb-255).